The chain runs to 92 residues: Small ribosomal subunit protein uS19 (92 aa).

Belongs to the universal ribosomal protein uS19 family.

Protein S19 forms a complex with S13 that binds strongly to the 16S ribosomal RNA. The polypeptide is Small ribosomal subunit protein uS19 (Vibrio parahaemolyticus serotype O3:K6 (strain RIMD 2210633)).